A 165-amino-acid polypeptide reads, in one-letter code: Ubiquitin-like protein 4B (165 aa).

One can recognise a Ubiquitin-like domain in the interval 1 to 76 (MFLTVKLLLG…ISVVVRPLEK (76 aa)). A disordered region spans residues 139-165 (EPLAQPTGEREPEVLSPNKEEEKEAVQ). Residues 146–165 (GEREPEVLSPNKEEEKEAVQ) are compositionally biased toward basic and acidic residues.

The protein resides in the cytoplasm. The chain is Ubiquitin-like protein 4B (UBL4B) from Bos taurus (Bovine).